Consider the following 114-residue polypeptide: uncharacterized protein (114 aa).

It to E.coli YfiI and P.aeruginosa RluD.

This is an uncharacterized protein from Escherichia coli O6:H1 (strain CFT073 / ATCC 700928 / UPEC).